The following is a 321-amino-acid chain: Cytochrome c biogenesis protein CcsA (321 aa).

Transmembrane regions (helical) follow at residues 17 to 37 (IISIVITIQLIDLLVYQIVGI), 43 to 63 (KGIIATFFCITGLLITRWIYS), 143 to 163 (MLLSYAALLCGALLSVAFLVI), 225 to 245 (VISLGFIFSTIGILSGAVWAN), 258 to 275 (ETWAFITWTIFAIYLHTR), and 287 to 307 (IVASIGFLIIWICYFGVNLLG).

This sequence belongs to the CcmF/CycK/Ccl1/NrfE/CcsA family. In terms of assembly, may interact with Ccs1.

It localises to the plastid. The protein resides in the chloroplast thylakoid membrane. Functionally, required during biogenesis of c-type cytochromes (cytochrome c6 and cytochrome f) at the step of heme attachment. The chain is Cytochrome c biogenesis protein CcsA from Drimys granadensis.